The following is a 578-amino-acid chain: Raftlin (578 aa).

A lipid anchor (N-myristoyl glycine) is attached at G2. C3 is lipidated: S-palmitoyl cysteine. Positions 169–184 are enriched in polar residues; it reads VNSAGSSAPVSTANST. 3 disordered regions span residues 169-271, 449-525, and 551-578; these read VNSA…VHEE, FSRE…PGGL, and CTGHSNPGEDARDGDAEEVRELGTVEEN. Phosphoserine occurs at positions 183, 199, and 220. A compositionally biased stretch (basic and acidic residues) spans 185–206; the sequence is EDARDAKNARGDHASLENEKPG. The segment covering 457-466 has biased composition (basic residues); it reads RQMRKSKGKL. Over residues 467-485 the composition is skewed to basic and acidic residues; that stretch reads SARDKQQAEENEKNLEDQS. S505 is subject to Phosphoserine. Composition is skewed to basic and acidic residues over residues 506–518 and 557–578; these read EEMKGPVQEDKGE and PGEDARDGDAEEVRELGTVEEN.

This sequence belongs to the raftlin family. As to quaternary structure, interacts with TLR4; the interaction occurs in response to lipopolysaccharide stimulation. Interacts with CLTC; the interaction occurs in response to pathogens. Interacts with AP2A1 and AP2B1. As to expression, expressed in B-cells (at protein level). Expressed in dendritic cells and macrophages.

The protein localises to the cell membrane. The protein resides in the cytoplasm. Its subcellular location is the membrane raft. It is found in the endosome. It localises to the early endosome. In terms of biological role, involved in protein trafficking via association with clathrin and AP2 complex. Upon bacterial lipopolysaccharide stimulation, mediates internalization of TLR4 to endosomes in dendritic cells and macrophages; and internalization of poly(I:C) to TLR3-positive endosomes in myeloid dendritic cells and epithelial cells; resulting in activation of TICAM1-mediated signaling and subsequent IFNB1 production. Involved in T-cell antigen receptor-mediated signaling by regulating tyrosine kinase LCK localization, T-cell dependent antibody production and cytokine secretion. May regulate B-cell antigen receptor-mediated signaling. May play a pivotal role in the formation and/or maintenance of lipid rafts. The protein is Raftlin (RFTN1) of Homo sapiens (Human).